The chain runs to 237 residues: 1-(5-phosphoribosyl)-5-[(5-phosphoribosylamino)methylideneamino] imidazole-4-carboxamide isomerase (237 aa).

The active-site Proton acceptor is D8. The active-site Proton donor is the D130.

Belongs to the HisA/HisF family.

The protein resides in the cytoplasm. The enzyme catalyses 1-(5-phospho-beta-D-ribosyl)-5-[(5-phospho-beta-D-ribosylamino)methylideneamino]imidazole-4-carboxamide = 5-[(5-phospho-1-deoxy-D-ribulos-1-ylimino)methylamino]-1-(5-phospho-beta-D-ribosyl)imidazole-4-carboxamide. It functions in the pathway amino-acid biosynthesis; L-histidine biosynthesis; L-histidine from 5-phospho-alpha-D-ribose 1-diphosphate: step 4/9. The protein is 1-(5-phosphoribosyl)-5-[(5-phosphoribosylamino)methylideneamino] imidazole-4-carboxamide isomerase of Caldicellulosiruptor saccharolyticus (strain ATCC 43494 / DSM 8903 / Tp8T 6331).